A 52-amino-acid chain; its full sequence is Photosystem II reaction center protein M (52 aa).

A helical membrane pass occupies residues 6-26; that stretch reads FGFAASLLFVGVPTIFLIGLF. The disordered stretch occupies residues 31–52; sequence DGEKSSFYSDTSKGRLSPEPKK. A compositionally biased stretch (basic and acidic residues) spans 42–52; sequence SKGRLSPEPKK.

This sequence belongs to the PsbM family. As to quaternary structure, PSII is composed of 1 copy each of membrane proteins PsbA, PsbB, PsbC, PsbD, PsbE, PsbF, PsbH, PsbI, PsbJ, PsbK, PsbL, PsbM, PsbT, PsbX, PsbY, Psb30/Ycf12, peripheral proteins PsbO, CyanoQ (PsbQ), PsbU, PsbV and a large number of cofactors. It forms dimeric complexes.

Its subcellular location is the cellular thylakoid membrane. In terms of biological role, one of the components of the core complex of photosystem II (PSII). PSII is a light-driven water:plastoquinone oxidoreductase that uses light energy to abstract electrons from H(2)O, generating O(2) and a proton gradient subsequently used for ATP formation. It consists of a core antenna complex that captures photons, and an electron transfer chain that converts photonic excitation into a charge separation. This subunit is found at the monomer-monomer interface. The chain is Photosystem II reaction center protein M from Prochlorococcus marinus (strain NATL1A).